Consider the following 102-residue polypeptide: MYAIIETGGKQIKVEAGQEIYVEKLAGEVGDVVTFDKVLFVGGDSAKVGVPFVEGATVTAKVEKQGRAKKLTVYKYKPKKNYHKKQGHRQPYTKLTIDAINA.

This sequence belongs to the bacterial ribosomal protein bL21 family. Part of the 50S ribosomal subunit. Contacts protein L20.

In terms of biological role, this protein binds to 23S rRNA in the presence of protein L20. In Listeria monocytogenes serotype 4b (strain F2365), this protein is Large ribosomal subunit protein bL21.